The chain runs to 101 residues: Small ribosomal subunit protein uS14 (101 aa).

Basic and acidic residues predominate over residues 1–10 (MAKKSSIEKN). The segment at 1–25 (MAKKSSIEKNNRRKKMAKNAAPKRE) is disordered.

It belongs to the universal ribosomal protein uS14 family. Part of the 30S ribosomal subunit. Contacts proteins S3 and S10.

Its function is as follows. Binds 16S rRNA, required for the assembly of 30S particles and may also be responsible for determining the conformation of the 16S rRNA at the A site. The chain is Small ribosomal subunit protein uS14 from Rhodopseudomonas palustris (strain BisA53).